The chain runs to 194 residues: Crossover junction endodeoxyribonuclease RuvC (194 aa).

Catalysis depends on residues Asp-7, Glu-68, and Asp-141. Residues Asp-7, Glu-68, and Asp-141 each coordinate Mg(2+).

It belongs to the RuvC family. As to quaternary structure, homodimer which binds Holliday junction (HJ) DNA. The HJ becomes 2-fold symmetrical on binding to RuvC with unstacked arms; it has a different conformation from HJ DNA in complex with RuvA. In the full resolvosome a probable DNA-RuvA(4)-RuvB(12)-RuvC(2) complex forms which resolves the HJ. Mg(2+) is required as a cofactor.

The protein resides in the cytoplasm. It catalyses the reaction Endonucleolytic cleavage at a junction such as a reciprocal single-stranded crossover between two homologous DNA duplexes (Holliday junction).. The RuvA-RuvB-RuvC complex processes Holliday junction (HJ) DNA during genetic recombination and DNA repair. Endonuclease that resolves HJ intermediates. Cleaves cruciform DNA by making single-stranded nicks across the HJ at symmetrical positions within the homologous arms, yielding a 5'-phosphate and a 3'-hydroxyl group; requires a central core of homology in the junction. The consensus cleavage sequence is 5'-(A/T)TT(C/G)-3'. Cleavage occurs on the 3'-side of the TT dinucleotide at the point of strand exchange. HJ branch migration catalyzed by RuvA-RuvB allows RuvC to scan DNA until it finds its consensus sequence, where it cleaves and resolves the cruciform DNA. This Bifidobacterium longum (strain DJO10A) protein is Crossover junction endodeoxyribonuclease RuvC.